Consider the following 250-residue polypeptide: Tetrahydromethanopterin S-methyltransferase subunit D (250 aa).

Transmembrane regions (helical) follow at residues 9-29, 47-67, 86-106, 144-164, 184-204, and 230-250; these read IIWM…VHFV, GTVQ…GFMM, IMIA…VGVV, IIGG…LIEV, LVAV…VIPS, and LVAS…LGGI.

Belongs to the MtrD family. In terms of assembly, the complex is composed of 8 subunits; MtrA, MtrB, MtrC, MtrD, MtrE, MtrF, MtrG and MtrH.

It is found in the cell membrane. The catalysed reaction is 5-methyl-5,6,7,8-tetrahydromethanopterin + coenzyme M + 2 Na(+)(in) = 5,6,7,8-tetrahydromethanopterin + methyl-coenzyme M + 2 Na(+)(out). It participates in one-carbon metabolism; methanogenesis from CO(2); methyl-coenzyme M from 5,10-methylene-5,6,7,8-tetrahydromethanopterin: step 2/2. In terms of biological role, part of a complex that catalyzes the formation of methyl-coenzyme M and tetrahydromethanopterin from coenzyme M and methyl-tetrahydromethanopterin. This is an energy-conserving, sodium-ion translocating step. In Methanosarcina barkeri (strain Fusaro / DSM 804), this protein is Tetrahydromethanopterin S-methyltransferase subunit D.